The sequence spans 164 residues: Protein-export protein SecB (164 aa).

Belongs to the SecB family. In terms of assembly, homotetramer, a dimer of dimers. One homotetramer interacts with 1 SecA dimer.

Its subcellular location is the cytoplasm. In terms of biological role, one of the proteins required for the normal export of preproteins out of the cell cytoplasm. It is a molecular chaperone that binds to a subset of precursor proteins, maintaining them in a translocation-competent state. It also specifically binds to its receptor SecA. The polypeptide is Protein-export protein SecB (Ruegeria sp. (strain TM1040) (Silicibacter sp.)).